The primary structure comprises 90 residues: Small ribosomal subunit protein uS15 (90 aa).

Belongs to the universal ribosomal protein uS15 family. Part of the 30S ribosomal subunit. Forms a bridge to the 50S subunit in the 70S ribosome, contacting the 23S rRNA.

In terms of biological role, one of the primary rRNA binding proteins, it binds directly to 16S rRNA where it helps nucleate assembly of the platform of the 30S subunit by binding and bridging several RNA helices of the 16S rRNA. Its function is as follows. Forms an intersubunit bridge (bridge B4) with the 23S rRNA of the 50S subunit in the ribosome. The protein is Small ribosomal subunit protein uS15 of Wolbachia sp. subsp. Brugia malayi (strain TRS).